The following is a 582-amino-acid chain: Vesicular glutamate transporter 2 (582 aa).

Residues methionine 1–tyrosine 71 are Cytoplasmic-facing. A helical transmembrane segment spans residues isoleucine 72 to glycine 92. Residues valine 93–glycine 125 lie on the Vesicular side of the membrane. 2 N-linked (GlcNAc...) asparagine glycosylation sites follow: asparagine 100 and asparagine 101. A helical membrane pass occupies residues methionine 126–alanine 146. At serine 147–arginine 148 the chain is on the cytoplasmic side. Residues leucine 149–isoleucine 169 traverse the membrane as a helical segment. The Vesicular portion of the chain corresponds to proline 170–tyrosine 177. Residues glycine 178–cysteine 198 form a helical membrane-spanning segment. Residues histidine 199–threonine 216 are Cytoplasmic-facing. A helical membrane pass occupies residues threonine 217–valine 237. The Vesicular portion of the chain corresponds to glutamine 238–serine 244. Residues valine 245 to tyrosine 265 form a helical membrane-spanning segment. Over glutamate 266–methionine 310 the chain is Cytoplasmic. The helical transmembrane segment at proline 311–isoleucine 331 threads the bilayer. At serine 332 to glycine 349 the chain is on the vesicular side. A helical membrane pass occupies residues methionine 350 to alanine 370. Topologically, residues aspartate 371–lysine 386 are cytoplasmic. A helical membrane pass occupies residues isoleucine 387–histidine 407. Over threonine 408–arginine 409 the chain is Vesicular. A helical transmembrane segment spans residues glycine 410–phenylalanine 430. The Cytoplasmic portion of the chain corresponds to asparagine 431 to serine 443. Residues isoleucine 444 to valine 464 traverse the membrane as a helical segment. Over glycine 465 to glutamine 477 the chain is Vesicular. Asparagine 470 is a glycosylation site (N-linked (GlcNAc...) asparagine). The chain crosses the membrane as a helical span at residues tyrosine 478–alanine 498. Residues serine 499–serine 582 lie on the Cytoplasmic side of the membrane.

This sequence belongs to the major facilitator superfamily. Sodium/anion cotransporter family. VGLUT subfamily. As to expression, expressed in brain. Expressed in hippocampal neurons (at protein level).

It is found in the cytoplasmic vesicle. The protein resides in the secretory vesicle. It localises to the synaptic vesicle membrane. The protein localises to the synapse. Its subcellular location is the synaptosome. It is found in the cell membrane. It carries out the reaction L-glutamate(out) = L-glutamate(in). The enzyme catalyses K(+)(in) + H(+)(out) = K(+)(out) + H(+)(in). It catalyses the reaction 3 Na(+)(out) + phosphate(out) = 3 Na(+)(in) + phosphate(in). The catalysed reaction is phosphate(in) = phosphate(out). It carries out the reaction chloride(in) = chloride(out). Chloride channel activity is allosterically activated by lumenal H(+) and Cl(-) leading to synaptic vesicles acidification. The L-glutamate transport activity is allosterically activated by lumenal H(+) and Cl(-). The allosteric requirement for H(+) efficiently prevents non-vesicular efflux across the plasma membrane. The L-glutamate uniporter activity exhibits a biphasic dependence on chloride concentration. In terms of biological role, multifunctional transporter that transports L-glutamate as well as multiple ions such as chloride, proton, potassium, sodium and phosphate. At the synaptic vesicle membrane, mainly functions as a uniporter which transports preferentially L-glutamate but also, phosphate from the cytoplasm into synaptic vesicles at presynaptic nerve terminals of excitatory neural cells. The L-glutamate or phosphate uniporter activity is electrogenic and is driven by the proton electrochemical gradient, mainly by the electrical gradient established by the vacuolar H(+)-ATPase across the synaptic vesicle membrane. In addition, functions as a chloride channel that allows a chloride permeation through the synaptic vesicle membrane therefore affects the proton electrochemical gradient and promotes synaptic vesicles acidification. Moreover, functions as a vesicular K(+)/H(+) antiport allowing to maintain the electrical gradient and to decrease chemical gradient and therefore sustain vesicular glutamate uptake. The vesicular H(+)/H(+) antiport activity is electroneutral. At the plasma membrane, following exocytosis, functions as a symporter of Na(+) and phosphate from the extracellular space to the cytoplasm allowing synaptic phosphate homeostasis regulation. The symporter activity is driven by an inside negative membrane potential and is electrogenic. Also involved in the regulation of retinal hyaloid vessel regression during postnatal development. May also play a role in the endocrine glutamatergic system of other tissues such as pineal gland and pancreas. The chain is Vesicular glutamate transporter 2 from Mus musculus (Mouse).